The following is a 225-amino-acid chain: Peptidyl-tRNA hydrolase (225 aa).

Y14 serves as a coordination point for tRNA. H19 serves as the catalytic Proton acceptor. Positions 64, 66, and 112 each coordinate tRNA. The tract at residues 184 to 225 (ALRMQPPKPEKPKPAAKAPEAQAPEAAPDERSALQKLADRFR) is disordered. Positions 198–209 (AAKAPEAQAPEA) are enriched in low complexity. The span at 211–225 (PDERSALQKLADRFR) shows a compositional bias: basic and acidic residues.

It belongs to the PTH family. In terms of assembly, monomer.

It localises to the cytoplasm. It catalyses the reaction an N-acyl-L-alpha-aminoacyl-tRNA + H2O = an N-acyl-L-amino acid + a tRNA + H(+). In terms of biological role, hydrolyzes ribosome-free peptidyl-tRNAs (with 1 or more amino acids incorporated), which drop off the ribosome during protein synthesis, or as a result of ribosome stalling. Its function is as follows. Catalyzes the release of premature peptidyl moieties from peptidyl-tRNA molecules trapped in stalled 50S ribosomal subunits, and thus maintains levels of free tRNAs and 50S ribosomes. In Cereibacter sphaeroides (strain ATCC 17023 / DSM 158 / JCM 6121 / CCUG 31486 / LMG 2827 / NBRC 12203 / NCIMB 8253 / ATH 2.4.1.) (Rhodobacter sphaeroides), this protein is Peptidyl-tRNA hydrolase.